A 585-amino-acid chain; its full sequence is Lipoprotein LpqB (585 aa).

An N-terminal signal peptide occupies residues 1-17 (MGRKLLGLLMLAVLLAG). Cys-18 is lipidated: N-palmitoyl cysteine. Cys-18 is lipidated: S-diacylglycerol cysteine. Disordered stretches follow at residues 24–46 (SSAP…KPTP) and 560–585 (PSAD…VLPG).

This sequence belongs to the LpqB lipoprotein family.

The protein resides in the cell membrane. The sequence is that of Lipoprotein LpqB from Mycobacterium paratuberculosis.